Reading from the N-terminus, the 360-residue chain is Magnesium transporter NIPA2 (360 aa).

The Extracellular segment spans residues 1–9 (MSQGRGKYD). Residues 10–30 (FYIGLGLAMSSSIFIGGSFIL) form a helical membrane-spanning segment. Over 31-56 (KKKGLLRLARKGSMRAGQGGHAYLKE) the chain is Cytoplasmic. The chain crosses the membrane as a helical span at residues 57–77 (WLWWAGLLSMGAGEVANFAAY). Position 78 (A78) is a topological domain, extracellular. A helical membrane pass occupies residues 79–99 (FAPATLVTPLGALSVLVSAIL). Topologically, residues 100-107 (SSYFLNER) are cytoplasmic. Residues 108–128 (LNLHGKIGCLLSILGSTVMVI) traverse the membrane as a helical segment. At 129 to 149 (HAPKEEEIETLNEMSHKLGDP) the chain is on the extracellular side. A helical transmembrane segment spans residues 150–170 (GFVVFATLVVIVALILIFVVG). Residues 171 to 175 (PRHGQ) are Cytoplasmic-facing. A helical membrane pass occupies residues 176-196 (TNILVYITICSVIGAFSVSCV). Residues 197 to 215 (KGLGIAIKELFAGKPVLRH) lie on the Extracellular side of the membrane. The chain crosses the membrane as a helical span at residues 216–236 (PLAWILLLSLIVCVSTQINYL). Topologically, residues 237 to 246 (NRALDIFNTS) are cytoplasmic. The helical transmembrane segment at 247-267 (IVTPIYYVFFTTSVLTCSAIL) threads the bilayer. Residues 268-278 (FKEWQDMPVDD) are Extracellular-facing. The helical transmembrane segment at 279–299 (VIGTLSGFFTIIVGIFLLHAF) threads the bilayer. Residues 300-360 (KDVSFSLASL…SRRNGNLTAF (61 aa)) are Cytoplasmic-facing.

This sequence belongs to the NIPA family. In terms of tissue distribution, widely expressed.

Its subcellular location is the cell membrane. It localises to the early endosome. It carries out the reaction Mg(2+)(in) = Mg(2+)(out). Functionally, acts as a selective Mg(2+) transporter. The protein is Magnesium transporter NIPA2 (NIPA2) of Homo sapiens (Human).